The sequence spans 422 residues: FAD-dependent monooxygenase ptmM (422 aa).

The chain crosses the membrane as a helical span at residues 8–24 (VIIVGGSIAGLTLAHCL). Glutamate 35, glycine 49, arginine 108, aspartate 308, and alanine 321 together coordinate FAD.

This sequence belongs to the paxM FAD-dependent monooxygenase family. FAD is required as a cofactor.

It is found in the membrane. It functions in the pathway secondary metabolite biosynthesis. FAD-dependent monooxygenase; part of the gene cluster that mediates the biosynthesis of the indole diterpenes penitrems. The geranylgeranyl diphosphate (GGPP) synthase ptmG catalyzes the first step in penitrem biosynthesis via conversion of farnesyl pyrophosphate and isopentyl pyrophosphate into geranylgeranyl pyrophosphate (GGPP). Condensation of indole-3-glycerol phosphate with GGPP by the prenyl transferase ptmC then forms 3-geranylgeranylindole (3-GGI). Epoxidation by the FAD-dependent monooxygenase ptmM leads to a epoxidized-GGI that is substrate of the terpene cyclase ptmB for cyclization to yield paspaline. Paspaline is subsequently converted to 13-desoxypaxilline by the cytochrome P450 monooxygenase ptmP, the latter being then converted to paxilline by the cytochrome P450 monooxygenase ptmQ. Paxilline is converted to beta-paxitriol via C-10 ketoreduction by the short-chain dehydrogenase ptmH which can be monoprenylated at the C-20 by the indole diterpene prenyltransferase ptmD. A two-step elimination (acetylation and elimination) process performed by the O-acetyltransferase ptmV and ptmI leads to the production of the prenylated form of penijanthine. The FAD-linked oxidoreductase ptmO then converts the prenylated form of penijanthine into PC-M5 which is in turn transformed into PC-M4 by the aromatic dimethylallyltransferase ptmE. Five sequential oxidative transformations performed by the cytochrome P450 monooxygenases ptmK, ptmU, ptmL, ptmN and ptmJ yield the various penitrem compounds. PtmK, ptmU and ptmM are involved in the formation of the key bicyclic ring of penitrem C via the formation of the intermediates secopenitrem D and penitrem D. PtmL catalyzes the epoxidation of penitrem D and C to yield penitrem B and F, respectively. PtmJ catalyzes the last benzylic hydroxylation to convert penitrem B to prenitrem E and penitrem F to penitrem A. This Penicillium ochrochloron protein is FAD-dependent monooxygenase ptmM.